We begin with the raw amino-acid sequence, 130 residues long: MSMQDPISDMLTRIRNGQAANKVAVKMPSSKLKVAIAALLKAEGYIVDFAVEGEAKPELEVTLKYFQAKPVIEQLKRVSRPGLRVYKKKDDLPSVMGGLGVAVVSTSKGLMSDRAARKAGLGGEIICYVA.

This sequence belongs to the universal ribosomal protein uS8 family. In terms of assembly, part of the 30S ribosomal subunit. Contacts proteins S5 and S12.

Functionally, one of the primary rRNA binding proteins, it binds directly to 16S rRNA central domain where it helps coordinate assembly of the platform of the 30S subunit. The chain is Small ribosomal subunit protein uS8 from Vibrio vulnificus (strain CMCP6).